The primary structure comprises 279 residues: Urease accessory protein UreD (279 aa).

It belongs to the UreD family. As to quaternary structure, ureD, UreF and UreG form a complex that acts as a GTP-hydrolysis-dependent molecular chaperone, activating the urease apoprotein by helping to assemble the nickel containing metallocenter of UreC. The UreE protein probably delivers the nickel.

The protein resides in the cytoplasm. In terms of biological role, required for maturation of urease via the functional incorporation of the urease nickel metallocenter. The protein is Urease accessory protein UreD of Pseudomonas fluorescens (strain Pf0-1).